Consider the following 516-residue polypeptide: D-alanine--D-alanyl carrier protein ligase (516 aa).

156 to 157 (TS) is an ATP binding site. Asp-203 contributes to the D-alanine binding site. ATP is bound at residue 298–303 (NAYGPT). Val-307 provides a ligand contact to D-alanine. ATP contacts are provided by residues Asp-389, 401-404 (YGGR), and Lys-503. Position 503 (Lys-503) interacts with D-alanine.

It belongs to the ATP-dependent AMP-binding enzyme family. DltA subfamily.

The protein resides in the cytoplasm. The enzyme catalyses holo-[D-alanyl-carrier protein] + D-alanine + ATP = D-alanyl-[D-alanyl-carrier protein] + AMP + diphosphate. It participates in cell wall biogenesis; lipoteichoic acid biosynthesis. Its function is as follows. Catalyzes the first step in the D-alanylation of lipoteichoic acid (LTA), the activation of D-alanine and its transfer onto the D-alanyl carrier protein (Dcp) DltC. In an ATP-dependent two-step reaction, forms a high energy D-alanyl-AMP intermediate, followed by transfer of the D-alanyl residue as a thiol ester to the phosphopantheinyl prosthetic group of the Dcp. D-alanylation of LTA plays an important role in modulating the properties of the cell wall in Gram-positive bacteria, influencing the net charge of the cell wall. The protein is D-alanine--D-alanyl carrier protein ligase of Streptococcus pneumoniae (strain 70585).